We begin with the raw amino-acid sequence, 634 residues long: Extracellular metalloproteinase mep (634 aa).

Positions 1–18 (MRGLLLAGALALPASVFA) are cleaved as a signal peptide. Residues 19–245 (HPAHQSYGLN…IHGVVDYVAE (227 aa)) constitute a propeptide that is removed on maturation. An N-linked (GlcNAc...) asparagine glycan is attached at Asn-286. His-429 lines the Zn(2+) pocket. The active site involves Glu-430. A Zn(2+)-binding site is contributed by His-433.

It belongs to the peptidase M36 family. Zn(2+) serves as cofactor.

It localises to the secreted. Its function is as follows. Secreted metalloproteinase that allows assimilation of proteinaceous substrates and probably acts as a virulence factor. The sequence is that of Extracellular metalloproteinase mep (mep) from Aspergillus fumigatus (strain CBS 144.89 / FGSC A1163 / CEA10) (Neosartorya fumigata).